Here is a 1492-residue protein sequence, read N- to C-terminus: Condensin-2 complex subunit D3-L (1492 aa).

Residues 152-201 (WPRDPNASRKRKKDTLKSSQGDNRGGRKRPRPPRRDEQEMEDLSEEEQDE) are disordered. Positions 189 to 201 (QEMEDLSEEEQDE) are enriched in acidic residues. 3 HEAT repeats span residues 543–581 (SSDG…CHLI), 583–619 (CSSE…AQPH), and 621–659 (VLIQ…QSIT). Disordered regions lie at residues 1269–1345 (QLER…PRPR), 1359–1406 (RKAA…SLVG), and 1454–1492 (IMSP…KPSN). A compositionally biased stretch (polar residues) spans 1277–1290 (NVQNPPSAESTGSP). Positions 1377–1388 (PSTPSPARTTSS) are enriched in low complexity.

Component of the condensin-2 complex, which contains the smc2 and smc4 heterodimer, and three non SMC subunits, ncapg2, ncaph2 and ncapd3 that probably regulate the complex.

The protein localises to the nucleus. Its function is as follows. Regulatory subunit of the condensin-2 complex, a complex which establishes mitotic chromosome architecture and is involved in physical rigidity of the chromatid axis. The protein is Condensin-2 complex subunit D3-L of Xenopus laevis (African clawed frog).